The primary structure comprises 253 residues: Sulfate transporter CysZ (253 aa).

A run of 4 helical transmembrane segments spans residues 31–51 (FVIL…WWLF), 75–95 (LLWP…FSTI), 151–171 (IVLL…PVLW), and 222–242 (IPLL…AMWV).

It belongs to the CysZ family.

The protein resides in the cell inner membrane. In terms of biological role, high affinity, high specificity proton-dependent sulfate transporter, which mediates sulfate uptake. Provides the sulfur source for the cysteine synthesis pathway. In Escherichia coli O139:H28 (strain E24377A / ETEC), this protein is Sulfate transporter CysZ.